Reading from the N-terminus, the 275-residue chain is 2,3,4,5-tetrahydropyridine-2,6-dicarboxylate N-succinyltransferase (275 aa).

Substrate contacts are provided by Arg104 and Asp141.

The protein belongs to the transferase hexapeptide repeat family. As to quaternary structure, homotrimer.

The protein resides in the cytoplasm. It carries out the reaction (S)-2,3,4,5-tetrahydrodipicolinate + succinyl-CoA + H2O = (S)-2-succinylamino-6-oxoheptanedioate + CoA. It functions in the pathway amino-acid biosynthesis; L-lysine biosynthesis via DAP pathway; LL-2,6-diaminopimelate from (S)-tetrahydrodipicolinate (succinylase route): step 1/3. The chain is 2,3,4,5-tetrahydropyridine-2,6-dicarboxylate N-succinyltransferase from Aeromonas salmonicida (strain A449).